A 208-amino-acid polypeptide reads, in one-letter code: MSCINESVCKLCRRENVKLFLKGDRCYTDKCSFERRPYPPGQHGQSRLKFSEFALQLREKQKAKRYYGVSEKQFVKYVGEANRAKELTGHALLKFLETRLDNVVYTLGYANSRREARQLVKHNHFLLNGKRANIPSILVNKGDVIQVAESSREMAKIQSAIQAVARRSVPAWLEADHAKFTGTVKDLPNREDVAVAVEENMIVEYYSR.

The S4 RNA-binding domain maps to 98-164; it reads TRLDNVVYTL…AKIQSAIQAV (67 aa).

Belongs to the universal ribosomal protein uS4 family. As to quaternary structure, part of the 30S ribosomal subunit. Contacts protein S5. The interaction surface between S4 and S5 is involved in control of translational fidelity.

One of the primary rRNA binding proteins, it binds directly to 16S rRNA where it nucleates assembly of the body of the 30S subunit. Functionally, with S5 and S12 plays an important role in translational accuracy. The polypeptide is Small ribosomal subunit protein uS4A (Bdellovibrio bacteriovorus (strain ATCC 15356 / DSM 50701 / NCIMB 9529 / HD100)).